The following is a 133-amino-acid chain: Bacteriohemerythrin (133 aa).

Residues histidine 19, histidine 56, glutamate 60, histidine 75, histidine 79, histidine 115, and aspartate 120 each contribute to the Fe cation site.

Belongs to the hemerythrin family. Monomer.

Oxygen-binding protein. May be involved in a storage mechanism or for delivery to oxygen-requiring enzymes. The oxygen-binding site contains two iron atoms. The polypeptide is Bacteriohemerythrin (Campylobacter jejuni subsp. jejuni serotype O:23/36 (strain 81-176)).